A 372-amino-acid chain; its full sequence is Flap endonuclease 1 (372 aa).

The tract at residues 1-105 is N-domain; that stretch reads MGVKGLNQLI…GELEKRLLRR (105 aa). Aspartate 34 contacts Mg(2+). DNA-binding residues include arginine 47 and arginine 71. Positions 87, 159, 161, 180, and 182 each coordinate Mg(2+). Positions 123-254 are I-domain; sequence EVLKFEKRLV…ATAFKLIKEH (132 aa). Residue glutamate 159 participates in DNA binding. DNA contacts are provided by glycine 232 and aspartate 234. Aspartate 234 contributes to the Mg(2+) binding site. Residues 339 to 347 form an interaction with PCNA region; sequence VQGRLDGFF.

The protein belongs to the XPG/RAD2 endonuclease family. FEN1 subfamily. As to quaternary structure, interacts with PCNA. Three molecules of RAD27 bind to one PCNA trimer with each molecule binding to one PCNA monomer. PCNA stimulates the nuclease activity without altering cleavage specificity. Mg(2+) serves as cofactor. Phosphorylated. Phosphorylation upon DNA damage induces relocalization to the nuclear plasma.

The protein localises to the nucleus. It is found in the nucleolus. The protein resides in the nucleoplasm. Its subcellular location is the mitochondrion. Structure-specific nuclease with 5'-flap endonuclease and 5'-3' exonuclease activities involved in DNA replication and repair. During DNA replication, cleaves the 5'-overhanging flap structure that is generated by displacement synthesis when DNA polymerase encounters the 5'-end of a downstream Okazaki fragment. It enters the flap from the 5'-end and then tracks to cleave the flap base, leaving a nick for ligation. Also involved in the long patch base excision repair (LP-BER) pathway, by cleaving within the apurinic/apyrimidinic (AP) site-terminated flap. Acts as a genome stabilization factor that prevents flaps from equilibrating into structures that lead to duplications and deletions. Also possesses 5'-3' exonuclease activity on nicked or gapped double-stranded DNA, and exhibits RNase H activity. Also involved in replication and repair of rDNA and in repairing mitochondrial DNA. This Candida dubliniensis (strain CD36 / ATCC MYA-646 / CBS 7987 / NCPF 3949 / NRRL Y-17841) (Yeast) protein is Flap endonuclease 1.